Reading from the N-terminus, the 359-residue chain is Glucose 1-dehydrogenase (359 aa).

Cys39 contacts Zn(2+). Residue Thr41 coordinates substrate. Residues His64 and Glu65 each contribute to the Zn(2+) site. The substrate site is built by Glu116 and Glu152. Glu152 contacts Zn(2+). 183-186 (AGPI) is an NADP(+) binding site.

Belongs to the zinc-containing alcohol dehydrogenase family. Glucose 1-dehydrogenase subfamily. Requires Zn(2+) as cofactor.

The catalysed reaction is D-glucose + NAD(+) = D-glucono-1,5-lactone + NADH + H(+). It catalyses the reaction D-glucose + NADP(+) = D-glucono-1,5-lactone + NADPH + H(+). Catalyzes the NAD(P)(+)-dependent oxidation of D-glucose to D-gluconate via gluconolactone. Can utilize both NAD(+) and NADP(+) as electron acceptor. Is involved in the degradation of glucose through a non-phosphorylative variant of the Entner-Doudoroff pathway. This is Glucose 1-dehydrogenase from Methanocella arvoryzae (strain DSM 22066 / NBRC 105507 / MRE50).